Here is a 395-residue protein sequence, read N- to C-terminus: S-adenosylmethionine synthase (395 aa).

His-12 lines the ATP pocket. Asp-14 lines the Mg(2+) pocket. Glu-40 is a binding site for K(+). Residues Glu-53 and Gln-96 each contribute to the L-methionine site. A flexible loop region spans residues 96–106; it reads QSKEIADAVNF. ATP contacts are provided by residues 174–176, 242–243, Asp-251, 257–258, Ala-274, and Lys-278; these read DGK, RF, and RK. L-methionine is bound at residue Asp-251. Lys-282 provides a ligand contact to L-methionine.

Belongs to the AdoMet synthase family. In terms of assembly, homotetramer; dimer of dimers. The cofactor is Mg(2+). K(+) serves as cofactor.

It localises to the cytoplasm. It catalyses the reaction L-methionine + ATP + H2O = S-adenosyl-L-methionine + phosphate + diphosphate. It functions in the pathway amino-acid biosynthesis; S-adenosyl-L-methionine biosynthesis; S-adenosyl-L-methionine from L-methionine: step 1/1. Functionally, catalyzes the formation of S-adenosylmethionine (AdoMet) from methionine and ATP. The overall synthetic reaction is composed of two sequential steps, AdoMet formation and the subsequent tripolyphosphate hydrolysis which occurs prior to release of AdoMet from the enzyme. This Tropheryma whipplei (strain TW08/27) (Whipple's bacillus) protein is S-adenosylmethionine synthase.